Here is an 85-residue protein sequence, read N- to C-terminus: MNYSTLIAVASLLTAGTESKKDGYPVKEGDCAFPCGYDNEYCDKLCKERKADSGYCYWGNILCYCYGLPDKAAIKGYGRCRPGKK.

An N-terminal signal peptide occupies residues 1–19 (MNYSTLIAVASLLTAGTES). The 61-residue stretch at 21-81 (KDGYPVKEGD…AAIKGYGRCR (61 aa)) folds into the LCN-type CS-alpha/beta domain. 4 disulfide bridges follow: cysteine 31-cysteine 80, cysteine 35-cysteine 56, cysteine 42-cysteine 63, and cysteine 46-cysteine 65. Proline amide is present on proline 82.

It belongs to the long (4 C-C) scorpion toxin superfamily. Sodium channel inhibitor family. Alpha subfamily. As to expression, expressed by the venom gland.

The protein resides in the secreted. In terms of biological role, alpha toxins bind voltage-independently at site-3 of sodium channels (Nav) and inhibit the inactivation of the activated channels, thereby blocking neuronal transmission. This chain is Toxin To9, found in Tityus obscurus (Amazonian scorpion).